The chain runs to 224 residues: Ribose-5-phosphate isomerase A (224 aa).

Substrate contacts are provided by residues 32 to 35 (TGST), 85 to 88 (DGAD), and 98 to 101 (KGGG). E107 functions as the Proton acceptor in the catalytic mechanism. K125 contributes to the substrate binding site.

It belongs to the ribose 5-phosphate isomerase family. Homodimer.

It catalyses the reaction aldehydo-D-ribose 5-phosphate = D-ribulose 5-phosphate. The protein operates within carbohydrate degradation; pentose phosphate pathway; D-ribose 5-phosphate from D-ribulose 5-phosphate (non-oxidative stage): step 1/1. Catalyzes the reversible conversion of ribose-5-phosphate to ribulose 5-phosphate. The sequence is that of Ribose-5-phosphate isomerase A from Pseudomonas entomophila (strain L48).